The sequence spans 160 residues: Large ribosomal subunit protein uL16 (160 aa).

This sequence belongs to the universal ribosomal protein uL16 family. Part of the 50S ribosomal subunit.

Its function is as follows. Binds 23S rRNA and is also seen to make contacts with the A and possibly P site tRNAs. The polypeptide is Large ribosomal subunit protein uL16 (Prochlorococcus marinus (strain MIT 9301)).